An 826-amino-acid polypeptide reads, in one-letter code: Ribosome-releasing factor 2, mitochondrial (826 aa).

A mitochondrion-targeting transit peptide spans 1–44 (MIVRNLLGKNRLCCLQPKLLLSTLSQRPQLQLSLQLLCRATRLY). The region spanning 53–340 (PKTRNIGIIA…GITNYLPSPL (288 aa)) is the tr-type G domain. Residues 62 to 69 (AHIDAGKT), 126 to 130 (DTPGH), and 180 to 183 (NKMD) contribute to the GTP site.

Belongs to the TRAFAC class translation factor GTPase superfamily. Classic translation factor GTPase family. EF-G/EF-2 subfamily.

The protein resides in the mitochondrion. Mitochondrial GTPase that mediates the disassembly of ribosomes from messenger RNA at the termination of mitochondrial protein biosynthesis. Not involved in the GTP-dependent ribosomal translocation step during translation elongation. This chain is Ribosome-releasing factor 2, mitochondrial, found in Lodderomyces elongisporus (strain ATCC 11503 / CBS 2605 / JCM 1781 / NBRC 1676 / NRRL YB-4239) (Yeast).